Consider the following 1040-residue polypeptide: Multidrug resistance protein MdtB (1040 aa).

12 helical membrane-spanning segments follow: residues phenylalanine 16–isoleucine 36, leucine 347–alanine 367, isoleucine 369–leucine 389, leucine 396–isoleucine 416, isoleucine 440–phenylalanine 460, phenylalanine 472–proline 492, tryptophan 537–isoleucine 557, leucine 863–isoleucine 883, phenylalanine 888–alanine 908, isoleucine 911–valine 931, isoleucine 968–valine 988, and isoleucine 998–isoleucine 1018.

It belongs to the resistance-nodulation-cell division (RND) (TC 2.A.6) family. MdtB subfamily. In terms of assembly, part of a tripartite efflux system composed of MdtA, MdtB and MdtC. MdtB forms a heteromultimer with MdtC.

The protein resides in the cell inner membrane. This is Multidrug resistance protein MdtB from Shigella sonnei (strain Ss046).